A 965-amino-acid polypeptide reads, in one-letter code: Calsyntenin-2 (965 aa).

The N-terminal stretch at Met-1–Gly-20 is a signal peptide. Over Gly-21–Ser-835 the chain is Extracellular. 2 Cadherin domains span residues Ile-46–Phe-162 and Lys-163–Phe-282. Residues Asn-58 and Asn-100 are each glycosylated (N-linked (GlcNAc...) asparagine). 4 N-linked (GlcNAc...) asparagine glycosylation sites follow: Asn-344, Asn-376, Asn-720, and Asn-733. The helical transmembrane segment at Ile-836–Val-856 threads the bilayer. The Cytoplasmic portion of the chain corresponds to Tyr-857 to Lys-965. The disordered stretch occupies residues Pro-891 to Lys-965. Residues Met-892–Glu-902 show a composition bias toward basic and acidic residues. Residues Asp-903–Glu-915 are compositionally biased toward acidic residues. Residues Gln-942–Gly-959 are compositionally biased toward polar residues.

The protein belongs to the calsyntenin family. Post-translationally, proteolytically processed under normal cellular conditions. A primary zeta-cleavage generates a large extracellular (soluble) N-terminal domain (sAlc) and a short C-terminal transmembrane fragment (CTF1). A secondary cleavage catalyzed by gamma-secretase within the transmembrane domain releases the beta-Alc-gamma chain in the extracellular milieu and produces an intracellular fragment (AlcICD). This processing is strongly suppressed in the tripartite complex formed with APBA2 and APP, which seems to prevent the association with PSEN1.

Its subcellular location is the postsynaptic cell membrane. It is found in the endoplasmic reticulum membrane. It localises to the golgi apparatus membrane. The protein resides in the cell projection. The protein localises to the dendrite. Postsynaptic adhesion molecule that binds to presynaptic neurexins to mediate synapse formation, and which is involved in learning and memory. Promotes synapse development by acting as a cell adhesion molecule at the postsynaptic membrane, which associates with neurexin-alpha at the presynaptic membrane. The protein is Calsyntenin-2 of Rattus norvegicus (Rat).